The primary structure comprises 281 residues: Lectin CaBo (281 aa).

An N-terminal signal peptide occupies residues 1 to 29; sequence MAISKKSSLYLPIFTFITMLLMVVNKVSS. Residue aspartate 119 participates in Ca(2+) binding. Arginine 139 contacts a carbohydrate. Positions 149 to 163 are cleaved as a propeptide — removed in mature form; it reads IIKNSTTIDFNAAYN. Mn(2+)-binding residues include glutamate 171 and aspartate 173. Aspartate 173, tyrosine 175, asparagine 177, and aspartate 182 together coordinate Ca(2+). A carbohydrate is bound at residue tyrosine 175. Mn(2+) is bound by residues aspartate 182 and histidine 187. A carbohydrate is bound at residue 262-263; sequence LY.

It belongs to the leguminous lectin family. As to quaternary structure, equilibrium between homodimer and homotetramer. In terms of processing, the mature chain consists of residues 164-281 followed by residues 30-148. Concanavalin A-like lectins of the Diocleinae subtribe undergo proteolytic processing referred to as circular permutation. The propeptide is split into an N-terminal and a C-terminal part, the gamma and beta chain, respectively. These are then religated in beta-gamma order to form the mature alpha chain. The beta and gamma chains can often be detected in cell extracts.

Functionally, D-mannose-specific lectin. In Canavalia bonariensis, this protein is Lectin CaBo.